Consider the following 91-residue polypeptide: PqqA binding protein (91 aa).

This sequence belongs to the PqqD family. As to quaternary structure, monomer. Interacts with PqqE.

The protein operates within cofactor biosynthesis; pyrroloquinoline quinone biosynthesis. Functions as a PqqA binding protein and presents PqqA to PqqE, in the pyrroloquinoline quinone (PQQ) biosynthetic pathway. This chain is PqqA binding protein, found in Pseudomonas putida (strain W619).